The primary structure comprises 144 residues: uncharacterized protein (144 aa).

A run of 4 helical transmembrane segments spans residues 27–47, 49–69, 83–103, and 106–126; these read VVCA…IPDI, LLPI…LLAL, IVLL…DATV, and ALDM…ILNV.

It is found in the membrane. This is an uncharacterized protein from Saccharomyces cerevisiae (strain ATCC 204508 / S288c) (Baker's yeast).